The primary structure comprises 1577 residues: Vacuolar protein sorting/targeting protein PEP1 (1577 aa).

Residues 1 to 21 (MILLHFVYSLWALLLIPLINA) form the signal peptide. Topologically, residues 22–1391 (EEFTPKVTKT…EFKEKYSVSA (1370 aa)) are lumenal. 2 BNR repeats span residues 58 to 68 (ISFDDGETWEK) and 101 to 111 (YITNDQGKSWE). Asn121 and Asn168 each carry an N-linked (GlcNAc...) asparagine glycan. BNR repeat units lie at residues 179 to 187 (SNDGGKSFS) and 414 to 423 (ISVDNGLTWT). N-linked (GlcNAc...) asparagine glycosylation is present at Asn445. BNR repeat units lie at residues 485–495 (FISRDGGLTWK), 531–541 (YYSLDQGKTWT), and 762–771 (YISHDGGQTI). N-linked (GlcNAc...) asparagine glycosylation is present at Asn791. One copy of the BNR 8 repeat lies at 859 to 869 (YLTNDGGETFT). Asn1008 carries N-linked (GlcNAc...) asparagine glycosylation. BNR repeat units follow at residues 1141–1150 (FFTTDGGETW) and 1183–1192 (YSTDFGKTWK). The N-linked (GlcNAc...) asparagine glycan is linked to Asn1301. Residues 1392 to 1412 (GPFAFIFISILLIIFFAAWFV) traverse the membrane as a helical segment. Residues 1413–1577 (YDRGIRRNGG…DSTAPSNENQ (165 aa)) lie on the Cytoplasmic side of the membrane. Residues 1531 to 1577 (DDVPTLEEEHTSYTDQPTTTDVPDALPEGNEENIDRPDSTAPSNENQ) form a disordered region.

This sequence belongs to the VPS10-related sortilin family.

The protein localises to the golgi apparatus. It is found in the trans-Golgi network membrane. The protein resides in the prevacuolar compartment membrane. Functions as a sorting receptor in the Golgi compartment required for the intracellular sorting and delivery of soluble vacuolar proteins, like carboxypeptidase Y (CPY) and proteinase A. Executes multiple rounds of sorting by cycling between the late Golgi and a prevacuolar endosome-like compartment. Binds the Golgi-modified P2 form of CPY, and this interaction is dependent on the presence of an intact CPY vacuolar protein sorting signal. This chain is Vacuolar protein sorting/targeting protein PEP1 (PEP1), found in Saccharomyces cerevisiae (strain JAY291) (Baker's yeast).